Here is a 758-residue protein sequence, read N- to C-terminus: 5-methyltetrahydropteroyltriglutamate--homocysteine methyltransferase (758 aa).

5-methyltetrahydropteroyltri-L-glutamate-binding positions include 16–19 (RELK) and Lys117. Residues 436-438 (IGS) and Glu489 each bind L-homocysteine. L-methionine contacts are provided by residues 436-438 (IGS) and Glu489. 5-methyltetrahydropteroyltri-L-glutamate contacts are provided by residues 520–521 (RC) and Trp566. L-homocysteine is bound at residue Asp604. Asp604 is a binding site for L-methionine. Residue Glu610 coordinates 5-methyltetrahydropteroyltri-L-glutamate. Zn(2+)-binding residues include His646, Cys648, and Glu670. Catalysis depends on His699, which acts as the Proton donor. Residue Cys731 participates in Zn(2+) binding.

It belongs to the vitamin-B12 independent methionine synthase family. Requires Zn(2+) as cofactor.

It carries out the reaction 5-methyltetrahydropteroyltri-L-glutamate + L-homocysteine = tetrahydropteroyltri-L-glutamate + L-methionine. Its pathway is amino-acid biosynthesis; L-methionine biosynthesis via de novo pathway; L-methionine from L-homocysteine (MetE route): step 1/1. In terms of biological role, catalyzes the transfer of a methyl group from 5-methyltetrahydrofolate to homocysteine resulting in methionine formation. The polypeptide is 5-methyltetrahydropteroyltriglutamate--homocysteine methyltransferase (Ruthia magnifica subsp. Calyptogena magnifica).